A 99-amino-acid chain; its full sequence is MLFRLLSPLSPLALTALLLFLLPPSDVSGLLLRPPPAPCLLLFLPFQILSGLLFLLFLPLFFSLPLLLSPSLPITMRFPARWRFLPWKAPSQPAAAFLF.

The chain crosses the membrane as a helical span at residues Phe-3–Pro-23. Short sequence motifs (SH3-binding) lie at residues Arg-4–Pro-11 and Arg-33–Pro-38. Residues Ile-48 to Leu-68 form a helical membrane-spanning segment. 2 short sequence motifs (SH3-binding) span residues Pro-70–Arg-77 and Lys-88–Pro-93. Lys-88 is covalently cross-linked (Glycyl lysine isopeptide (Lys-Gly) (interchain with G-Cter in ubiquitin); in isolate LAF).

Belongs to the HTLV-1 accessory protein p12I family. As to quaternary structure, p12I is a homodimer. Interacts with human CANX, CALR, ATP6V0C, IL2RB, IL2RG. Binds to MHC-I heavy chains HLA-A2, HLA-B7 and HLA-Cw4. Post-translationally, ubiquitinated; a fraction of P12I is degraded via the ubiquitin system.

The protein resides in the host endoplasmic reticulum membrane. It is found in the host Golgi apparatus. Its subcellular location is the host cis-Golgi network membrane. Functionally, p12I is a modulator of T-lymphocyte proliferation and immune function and may contribute to establish a persistent infection. Binds and down-modulates cell surface expression of interleukin-2 receptors IL2RB and IL2RG. Also down-modulates cell surface MHC-I molecules by binding to free immature MHC-I heavy chains in the ER and targeting them to the proteasome for degradation. Binding to IL2RB mediates recruitment of JAK1 and JAK3. As a result of this interaction, p12I increases DNA-binding and transcriptional activity of STAT5. The protein is Accessory protein p12I of Homo sapiens (Human).